Here is a 266-residue protein sequence, read N- to C-terminus: Type II pantothenate kinase (266 aa).

Residue 6-13 (DAGGTLIK) participates in ATP binding. Residue Glu-70 is the Proton acceptor of the active site. ATP is bound by residues Thr-99, 121 to 125 (GGMIQ), Tyr-137, and Ser-225.

It belongs to the type II pantothenate kinase family. Homodimer.

It localises to the cytoplasm. The catalysed reaction is (R)-pantothenate + ATP = (R)-4'-phosphopantothenate + ADP + H(+). It functions in the pathway cofactor biosynthesis; coenzyme A biosynthesis; CoA from (R)-pantothenate: step 1/5. Its function is as follows. Catalyzes the phosphorylation of pantothenate (Pan), the first step in CoA biosynthesis. This Staphylococcus haemolyticus (strain JCSC1435) protein is Type II pantothenate kinase.